The sequence spans 426 residues: Serine--tRNA ligase (426 aa).

Residues 44–67 (TEKQALQSERNATSKQIGMLKKKG) are disordered. The span at 47-59 (QALQSERNATSKQ) shows a compositional bias: polar residues. Residue 231 to 233 (TAE) coordinates L-serine. ATP-binding positions include 262–264 (RRE) and Val278. Glu285 is a binding site for L-serine. 349 to 352 (EVSS) is a binding site for ATP. Residue Ser384 participates in L-serine binding.

It belongs to the class-II aminoacyl-tRNA synthetase family. Type-1 seryl-tRNA synthetase subfamily. As to quaternary structure, homodimer. The tRNA molecule binds across the dimer.

The protein localises to the cytoplasm. The enzyme catalyses tRNA(Ser) + L-serine + ATP = L-seryl-tRNA(Ser) + AMP + diphosphate + H(+). It catalyses the reaction tRNA(Sec) + L-serine + ATP = L-seryl-tRNA(Sec) + AMP + diphosphate + H(+). It functions in the pathway aminoacyl-tRNA biosynthesis; selenocysteinyl-tRNA(Sec) biosynthesis; L-seryl-tRNA(Sec) from L-serine and tRNA(Sec): step 1/1. Functionally, catalyzes the attachment of serine to tRNA(Ser). Is also able to aminoacylate tRNA(Sec) with serine, to form the misacylated tRNA L-seryl-tRNA(Sec), which will be further converted into selenocysteinyl-tRNA(Sec). This is Serine--tRNA ligase from Akkermansia muciniphila (strain ATCC BAA-835 / DSM 22959 / JCM 33894 / BCRC 81048 / CCUG 64013 / CIP 107961 / Muc).